A 122-amino-acid polypeptide reads, in one-letter code: Small ribosomal subunit protein uS13c (122 aa).

Residues 102-122 are disordered; that stretch reads RTRTNARTRRGAKKTVAGKKK.

It belongs to the universal ribosomal protein uS13 family. In terms of assembly, part of the 30S ribosomal subunit.

It localises to the plastid. The protein localises to the chloroplast. In terms of biological role, located at the top of the head of the 30S subunit, it contacts several helices of the 16S rRNA. The polypeptide is Small ribosomal subunit protein uS13c (Guillardia theta (Cryptophyte)).